The primary structure comprises 98 residues: Cysteine-rich and transmembrane domain-containing protein WIH2 (98 aa).

The interval 1-77 is disordered; that stretch reads MSQYNQPPVG…PPQHQQQQSS (77 aa). A compositionally biased stretch (pro residues) spans 9–21; the sequence is VGVPPPQGYPPEG. Residues 37–55 show a composition bias toward low complexity; that stretch reads YPQQGYPPQGYPQQGYPQQ. Pro residues predominate over residues 56 to 70; the sequence is GYPPPYAPQYPPPPQ. Residues 75 to 92 traverse the membrane as a helical segment; sequence QSSPGFLEGCLAALCCCC.

It belongs to the CYSTM1 family. Expressed in floral organ primordia.

It localises to the membrane. Functionally, required for the promotion of megasporogenesis, or promotion of germ cell formation from somatic precursor cells. Acts redundantly with WIH1. Functions in a genetic pathway downstream of SPL/NZZ and WUS and together with TRN2 in promoting megasporogenesis. The protein is Cysteine-rich and transmembrane domain-containing protein WIH2 of Arabidopsis thaliana (Mouse-ear cress).